The chain runs to 148 residues: Large ribosomal subunit protein bL9 (148 aa).

It belongs to the bacterial ribosomal protein bL9 family.

Binds to the 23S rRNA. The chain is Large ribosomal subunit protein bL9 from Bifidobacterium animalis subsp. lactis (strain AD011).